Here is a 603-residue protein sequence, read N- to C-terminus: Baeyer-Villiger monooxygenase (603 aa).

FAD is bound by residues E94, 102-105, D114, Y120, and V164; that span reads TWYW. 112–114 contributes to the NADP(+) binding site; the sequence is HCD. NADP(+)-binding positions include 248 to 254, 271 to 272, and 386 to 387; these read TGATGVQ, RT, and KR.

Belongs to the FAD-binding monooxygenase family. It depends on FAD as a cofactor.

In terms of biological role, catalyzes a Baeyer-Villiger oxidation reaction, i.e. the insertion of an oxygen atom into a carbon-carbon bond adjacent to a carbonyl, which converts ketones to esters or lactones using NADPH and/or NADH as an electron donor. Thus, can convert bicyclo[3.2.0]hept-2-en-6-one into the oxidative lactone products 2-oxabicyclo[3.3.0]oct-6-en-3-one and 3-oxabicyclo[3.3.0]oct-6-en-2-one. Is also able to catalyze the sulfoxidation of methyl phenyl sulfide (thioanisole). The sequence is that of Baeyer-Villiger monooxygenase from Streptomyces coelicolor (strain ATCC BAA-471 / A3(2) / M145).